The chain runs to 774 residues: MSPAQIIRTPHSFPPSFTGTSSSAENSHAQSPQQVLTRAFVASGELNAAFGRTSTASEQDFTSLLGTLQRELERKTLSFPDIAELANQLAEAAKGDQGGHWLGRDEQQTLKGMIDRCKSQLAHTHASDASYDPLAQVCENLKTARLHQSISQMTGEAHAKVRGVPDLLALIQLDPDVLAEKPVGMTSYVNFGSFICMAKARTAELSEDLRSDPNEVALLLHPHADTILELERLPDALAALTENCPDTPTRDDLRSLAKETGELLQQLRANDLLPRSEEVSSYQGETSVRSREVVEPKLTLCQAGGNGQGQLEASSARPESLRYAPTRAASSGSEARVPGQAVGGKIADDAQKVAGLYAEKKRTNWTQANGVAGKISHKIQSLLGMRDAGSRVQAFVAFMADGKGRPGATMLDLGDGWMRATRVIKGEAALIDFQCDSDGKVVDARHPGRFPVLPQGNEREAFKTVLQELKFRGAETLSKVPVYYVNRNTRGYVIPTHGYVVAGHPNRGRKSGAVLYGVGGDPKRGPVALDEKLLGHLVGRSDSKTSSKLSAPVKAAISALAGASFATREDFYDAYCAVRGDAVDPLERHNEISSIYRLLPLSTMEMWPKKADDYRVARPAAPERDLRAFENLPKDIGRKAQLKKVSNVDSIDLLEAKRQFTLHQLYQDEMLGRNGTGVPSADFKPKVDAQRRDQLVASTPKFQRLPPHTTDKVGNCNTGASSLLQRAVDTYTEKNNLPPEKVTAASIFGIGSSHRLAIWDPLDGSSSNKSSKDR.

Disordered regions lie at residues 1 to 33 (MSPA…QSPQ) and 301 to 340 (CQAG…VPGQ). Over residues 9–23 (TPHSFPPSFTGTSSS) the composition is skewed to low complexity. Residues 24 to 33 (AENSHAQSPQ) are compositionally biased toward polar residues.

It belongs to the HopW family. As to quaternary structure, interacts (via C-terminus) with Arabidopsis WIN1, WIN2 and WIN3.

The protein localises to the secreted. In terms of biological role, induces hypersensitive response (HR). This chain is Effector protein hopW1-1 (hopW1-1), found in Pseudomonas syringae pv. maculicola.